Reading from the N-terminus, the 89-residue chain is HssA/B-like protein 14 (89 aa).

This sequence belongs to the hssA/B family.

The chain is HssA/B-like protein 14 (hssl14) from Dictyostelium discoideum (Social amoeba).